The sequence spans 417 residues: Imidazolonepropionase (417 aa).

Residues histidine 77 and histidine 79 each coordinate Fe(3+). Histidine 77 and histidine 79 together coordinate Zn(2+). 4-imidazolone-5-propanoate contacts are provided by arginine 86, tyrosine 149, and histidine 182. An N-formimidoyl-L-glutamate-binding site is contributed by tyrosine 149. Residue histidine 247 participates in Fe(3+) binding. Histidine 247 provides a ligand contact to Zn(2+). Glutamine 250 lines the 4-imidazolone-5-propanoate pocket. Aspartate 322 lines the Fe(3+) pocket. Residue aspartate 322 participates in Zn(2+) binding. Asparagine 324 and glycine 326 together coordinate N-formimidoyl-L-glutamate. Threonine 327 is a 4-imidazolone-5-propanoate binding site.

This sequence belongs to the metallo-dependent hydrolases superfamily. HutI family. Zn(2+) is required as a cofactor. It depends on Fe(3+) as a cofactor.

The protein resides in the cytoplasm. It carries out the reaction 4-imidazolone-5-propanoate + H2O = N-formimidoyl-L-glutamate. Its pathway is amino-acid degradation; L-histidine degradation into L-glutamate; N-formimidoyl-L-glutamate from L-histidine: step 3/3. Functionally, catalyzes the hydrolytic cleavage of the carbon-nitrogen bond in imidazolone-5-propanoate to yield N-formimidoyl-L-glutamate. It is the third step in the universal histidine degradation pathway. This is Imidazolonepropionase from Cupriavidus necator (strain ATCC 17699 / DSM 428 / KCTC 22496 / NCIMB 10442 / H16 / Stanier 337) (Ralstonia eutropha).